An 80-amino-acid chain; its full sequence is Small ribosomal subunit protein bS16 (80 aa).

This sequence belongs to the bacterial ribosomal protein bS16 family.

This chain is Small ribosomal subunit protein bS16, found in Acholeplasma laidlawii (strain PG-8A).